A 77-amino-acid chain; its full sequence is Tachyplesin-1 (77 aa).

A signal peptide spans 1–23 (MKKLVIALCLMMVLAVMVEEAEA). Disulfide bonds link cysteine 26–cysteine 39 and cysteine 30–cysteine 35. Arginine 40 carries the post-translational modification Arginine amide. Positions 41–77 (GKRNEVRQYRDRGYDVRAIPEETFFTRQDEDEDDDEE) are excised as a propeptide.

This sequence belongs to the tachyplesin/polyphemusin family. Hemocytes.

The protein localises to the secreted. Functionally, significantly inhibits the growth of Gram-negative and Gram-positive bacteria. The polypeptide is Tachyplesin-1 (Tachypleus tridentatus (Japanese horseshoe crab)).